The chain runs to 62 residues: uncharacterized protein (62 aa).

The interval 1–62 is disordered; that stretch reads MSSTAEEMAA…SNGEAKRKEK (62 aa). Residues 28-37 show a composition bias toward basic and acidic residues; sequence TKSDRVEHKH.

This is an uncharacterized protein from Caenorhabditis elegans.